The sequence spans 241 residues: Uridylate kinase (241 aa).

Residue 12-15 (KLSG) coordinates ATP. The interval 20–25 (GDKGQG) is involved in allosteric activation by GTP. Position 54 (Gly-54) interacts with UMP. ATP is bound by residues Gly-55 and Arg-59. UMP is bound by residues Asp-74 and 135 to 142 (TGSPYFST). The ATP site is built by Asn-163, Tyr-169, and Asp-172.

The protein belongs to the UMP kinase family. In terms of assembly, homohexamer.

The protein resides in the cytoplasm. It carries out the reaction UMP + ATP = UDP + ADP. It participates in pyrimidine metabolism; CTP biosynthesis via de novo pathway; UDP from UMP (UMPK route): step 1/1. With respect to regulation, allosterically activated by GTP. Inhibited by UTP. Catalyzes the reversible phosphorylation of UMP to UDP. The chain is Uridylate kinase from Leuconostoc mesenteroides subsp. mesenteroides (strain ATCC 8293 / DSM 20343 / BCRC 11652 / CCM 1803 / JCM 6124 / NCDO 523 / NBRC 100496 / NCIMB 8023 / NCTC 12954 / NRRL B-1118 / 37Y).